The primary structure comprises 236 residues: 2,3,4,5-tetrahydropyridine-2,6-dicarboxylate N-acetyltransferase (236 aa).

The protein belongs to the transferase hexapeptide repeat family. DapH subfamily.

It carries out the reaction (S)-2,3,4,5-tetrahydrodipicolinate + acetyl-CoA + H2O = L-2-acetamido-6-oxoheptanedioate + CoA. The protein operates within amino-acid biosynthesis; L-lysine biosynthesis via DAP pathway; LL-2,6-diaminopimelate from (S)-tetrahydrodipicolinate (acetylase route): step 1/3. Functionally, catalyzes the transfer of an acetyl group from acetyl-CoA to tetrahydrodipicolinate. The chain is 2,3,4,5-tetrahydropyridine-2,6-dicarboxylate N-acetyltransferase from Oceanobacillus iheyensis (strain DSM 14371 / CIP 107618 / JCM 11309 / KCTC 3954 / HTE831).